A 173-amino-acid chain; its full sequence is Lipoprotein signal peptidase (173 aa).

4 helical membrane-spanning segments follow: residues 24–44, 55–75, 80–100, and 105–125; these read PWLG…IAIL, ITGF…SFLA, WQRW…VWLL, and GQKL…GNVI. Residues Asp135 and Asp153 contribute to the active site. Residues 145–165 traverse the membrane as a helical segment; it reads HWPAFNVADCGICIGAVLLII.

The protein belongs to the peptidase A8 family.

Its subcellular location is the cell inner membrane. It carries out the reaction Release of signal peptides from bacterial membrane prolipoproteins. Hydrolyzes -Xaa-Yaa-Zaa-|-(S,diacylglyceryl)Cys-, in which Xaa is hydrophobic (preferably Leu), and Yaa (Ala or Ser) and Zaa (Gly or Ala) have small, neutral side chains.. It participates in protein modification; lipoprotein biosynthesis (signal peptide cleavage). In terms of biological role, this protein specifically catalyzes the removal of signal peptides from prolipoproteins. This chain is Lipoprotein signal peptidase, found in Ralstonia nicotianae (strain ATCC BAA-1114 / GMI1000) (Ralstonia solanacearum).